Reading from the N-terminus, the 290-residue chain is Cilia- and flagella-associated protein 298 (290 aa).

The protein belongs to the CFAP298 family. Interacts with ZMYND10.

The protein resides in the cytoplasm. The protein localises to the cytoskeleton. It localises to the cilium basal body. In terms of biological role, plays a role in motile cilium function, possibly by acting on outer dynein arm assembly. Seems to be important for initiation rather than maintenance of cilium motility. Required for correct positioning of cilia at the apical cell surface, suggesting an additional role in the planar cell polarity (PCP) pathway. May suppress canonical Wnt signaling activity. This chain is Cilia- and flagella-associated protein 298, found in Mus musculus (Mouse).